Consider the following 248-residue polypeptide: Small ribosomal subunit protein uS3 (248 aa).

The KH type-2 domain maps to 38–106; it reads IREYLEKGLD…MVALNILEVK (69 aa). Positions 214–248 are disordered; the sequence is SELNAPAQGRGRGDRNGRPRRGGQRRQRAQQKQEG. The span at 231-242 shows a compositional bias: basic residues; it reads RPRRGGQRRQRA.

The protein belongs to the universal ribosomal protein uS3 family. In terms of assembly, part of the 30S ribosomal subunit. Forms a tight complex with proteins S10 and S14.

Its function is as follows. Binds the lower part of the 30S subunit head. Binds mRNA in the 70S ribosome, positioning it for translation. The sequence is that of Small ribosomal subunit protein uS3 from Corynebacterium aurimucosum (strain ATCC 700975 / DSM 44827 / CIP 107346 / CN-1) (Corynebacterium nigricans).